A 1077-amino-acid polypeptide reads, in one-letter code: RNA polymerase-associated protein CTR9 (1077 aa).

TPR repeat units follow at residues 56 to 89 (KEHW…FQNS), 138 to 174 (IGNM…EDHR), 183 to 216 (CLFL…NPVL), 218 to 251 (PDPR…NPKN), 298 to 332 (PVLL…SPMI), 338 to 371 (SESS…NEDN), 373 to 405 (LAKL…NESL), 421 to 455 (FDAK…TLAT), 462 to 495 (SRAY…MEFI), 501 to 534 (LEVL…VSDK), 540 to 572 (ITLE…HPAY), 664 to 697 (GKKS…DPFN), 699 to 731 (FAAQ…LDNE), 732 to 764 (DVQL…FDNE), 768 to 801 (PHIL…AKTA), and 830 to 863 (AETL…FREL). Basic and acidic residues predominate over residues 959–980 (EREAMAISEHNVKDDSDLSDKD). Positions 959 to 1077 (EREAMAISEH…NDNDDNDGLF (119 aa)) are disordered. Phosphoserine is present on residues S1015 and S1017. Acidic residues-rich tracts occupy residues 1042-1051 (FIEDSDEEEA) and 1063-1077 (DNDE…DGLF).

In terms of assembly, component of the PAF1 complex which consists of at least CDC73, CTR9, LEO1, PAF1 and RTF1. Interacts with SPT6. Interacts with FACT subunits POB3 and SPT16.

The protein localises to the nucleus. Its subcellular location is the nucleoplasm. The PAF1 complex is a multifunctional complex. Involved in transcription initiation via genetic interactions with TATA-binding proteins. Involved in elongation. It regulates 3'-end formation of snR47 by modulating the recruitment or stable association of NRD1 and NAB3 with RNA polymerase II. Also has a role in transcription-coupled histone modification. Required for activation of RAD6 ubiquitin conjugate and the BRE1 ubiquitin ligase which ubiquitinate 'Lys-126' histone H2B. Activates the SET1 histone methyltransferase complex for methylation of 'Lys-4' of histone H3 and for methylation of 'Lys-73' of histone H3 by DOT1 and 'Lys-36' of histone H3 by SET2. In complex with PAF1, required for normal CLN1 and CLN2 G1 cyclin expression in late G1. Also has a role in chromosome segregation where it appears to be involved in microtubule placement. This chain is RNA polymerase-associated protein CTR9 (CTR9), found in Saccharomyces cerevisiae (strain ATCC 204508 / S288c) (Baker's yeast).